Reading from the N-terminus, the 219-residue chain is Interleukin-12 subunit alpha (219 aa).

The N-terminal stretch at 1–22 is a signal peptide; that stretch reads MCPARSLLLVATLVLLDHLSLA. Disulfide bonds link Cys-37/Cys-110, Cys-64/Cys-196, and Cys-85/Cys-123. N-linked (GlcNAc...) asparagine glycosylation is found at Asn-93 and Asn-107.

This sequence belongs to the IL-6 superfamily. As to quaternary structure, heterodimer with IL12B; disulfide-linked. This heterodimer is known as interleukin IL-12. Heterodimer with EBI3/IL27B; not disulfide-linked. This heterodimer is known as interleukin IL-35. Interacts with NBR1; this interaction promotes IL-12 secretion.

Its subcellular location is the secreted. Heterodimerizes with IL12B to form the IL-12 cytokine or with EBI3/IL27B to form the IL-35 cytokine. IL-12 is primarily produced by professional antigen-presenting cells (APCs) such as B-cells and dendritic cells (DCs) as well as macrophages and granulocytes and regulates T-cell and natural killer-cell responses, induces the production of interferon-gamma (IFN-gamma), favors the differentiation of T-helper 1 (Th1) cells and is an important link between innate resistance and adaptive immunity. Mechanistically, exerts its biological effects through a receptor composed of IL12R1 and IL12R2 subunits. Binding to the receptor results in the rapid tyrosine phosphorylation of a number of cellular substrates including the JAK family kinases TYK2 and JAK2. In turn, recruited STAT4 gets phosphorylated and translocates to the nucleus where it regulates cytokine/growth factor responsive genes. As part of IL-35, plays essential roles in maintaining the immune homeostasis of the liver microenvironment and also functions as an immune-suppressive cytokine. Mediates biological events through unconventional receptors composed of IL12RB2 and gp130/IL6ST heterodimers or homodimers. Signaling requires the transcription factors STAT1 and STAT4, which form a unique heterodimer that binds to distinct DNA sites. This chain is Interleukin-12 subunit alpha (IL12A), found in Homo sapiens (Human).